The sequence spans 344 residues: Heptahelical transmembrane protein 3 (344 aa).

Residues 1–76 (MKRRRSAKKS…AFSWHNETLN (76 aa)) are Cytoplasmic-facing. The helical transmembrane segment at 77–97 (IWTHLIGFGIFLWMTVVSCLE) threads the bilayer. Residues 98 to 147 (TTEISLAGVFNGMAGVRICLSSNQTLLHDSNVTHHISCLTSQGEAIPKWP) are Extracellular-facing. A helical transmembrane segment spans residues 148–168 (WLVYLVGAMGCLICSSVSHLL). The Cytoplasmic portion of the chain corresponds to 169-184 (ACHSKRFNVFFWRLDY). Residues 185–205 (AGISLMIVASFFAPIYYAFSC) form a helical membrane-spanning segment. The Extracellular segment spans residues 206 to 210 (HPNFR). Residues 211 to 231 (LLYLSSISILGLLAIITLLSP) form a helical membrane-spanning segment. The Cytoplasmic segment spans residues 232 to 244 (ALSTPRFRPFRAN). Residues 245 to 265 (LFLAMGSSAVIPATHVLCLYW) form a helical membrane-spanning segment. Topologically, residues 266 to 269 (DHPN) are extracellular. The chain crosses the membrane as a helical span at residues 270 to 290 (VFIALGYEIATALSYFVGATF). The Cytoplasmic segment spans residues 291-312 (YVSRVPERWKPGAFDMAGHSHQ). The chain crosses the membrane as a helical span at residues 313–333 (IFHVFVVMGALAHCVTTLLII). Residues 334–344 (DFSRASPSCGF) are Extracellular-facing.

It belongs to the ADIPOR family. Expressed in roots and flowers.

The protein localises to the membrane. In terms of biological role, may play a role in abiotic stress response. The polypeptide is Heptahelical transmembrane protein 3 (HHP3) (Arabidopsis thaliana (Mouse-ear cress)).